A 296-amino-acid polypeptide reads, in one-letter code: Morphine 6-dehydrogenase (296 aa).

13–22 contributes to the NADP(+) binding site; sequence GVKMPALGLG. Tyr-52 (proton donor) is an active-site residue. Residue His-110 coordinates substrate.

This sequence belongs to the aldo/keto reductase family. Monomer.

The catalysed reaction is morphine + NAD(+) = morphinone + NADH + H(+). The enzyme catalyses morphine + NADP(+) = morphinone + NADPH + H(+). It participates in alkaloid degradation; codeine degradation. The protein operates within alkaloid degradation; morphine degradation. Its function is as follows. Oxidizes only the C-6 hydroxy group of morphine and codeine. This Pseudomonas putida (Arthrobacter siderocapsulatus) protein is Morphine 6-dehydrogenase (morA).